A 659-amino-acid polypeptide reads, in one-letter code: Methionine--tRNA ligase (659 aa).

The short motif at 13–23 (YYPSGNLHIGH) is the 'HIGH' region element. A 'KMSKS' region motif is present at residues 308 to 312 (KMSKS). K311 is a binding site for ATP. The 101-residue stretch at 559–659 (DFDKVEIKAA…SAIPNGAVIK (101 aa)) folds into the tRNA-binding domain.

It belongs to the class-I aminoacyl-tRNA synthetase family. MetG type 2B subfamily. Homodimer.

It localises to the cytoplasm. The enzyme catalyses tRNA(Met) + L-methionine + ATP = L-methionyl-tRNA(Met) + AMP + diphosphate. Is required not only for elongation of protein synthesis but also for the initiation of all mRNA translation through initiator tRNA(fMet) aminoacylation. This is Methionine--tRNA ligase from Staphylococcus haemolyticus (strain JCSC1435).